A 130-amino-acid chain; its full sequence is Small ribosomal subunit protein uS9 (130 aa).

The tract at residues 107-130 is disordered; that stretch reads DSREVERKKVGLRKARRRPQFSKR. The span at 116 to 130 shows a compositional bias: basic residues; sequence VGLRKARRRPQFSKR.

Belongs to the universal ribosomal protein uS9 family.

The protein is Small ribosomal subunit protein uS9 of Marinomonas sp. (strain MWYL1).